A 237-amino-acid chain; its full sequence is NAD-dependent protein deacetylase (237 aa).

In terms of domain architecture, Deacetylase sirtuin-type spans 1–237 (MQDITQAEAI…TIFAELTIKE (237 aa)). Residues A25, T29, R37, Q100, I102, D103, and H118 each coordinate NAD(+). Residues I102 and D103 each coordinate nicotinamide. Catalysis depends on H118, which acts as the Proton acceptor. Positions 126, 129, 144, and 147 each coordinate Zn(2+). The NAD(+) site is built by T185, S186, and N209.

This sequence belongs to the sirtuin family. Class U subfamily.

It is found in the cytoplasm. It catalyses the reaction N(6)-acetyl-L-lysyl-[protein] + NAD(+) + H2O = 2''-O-acetyl-ADP-D-ribose + nicotinamide + L-lysyl-[protein]. NAD-dependent protein deacetylase which modulates the activities of several enzymes which are inactive in their acetylated form. This Enterococcus faecalis (strain ATCC 700802 / V583) protein is NAD-dependent protein deacetylase.